We begin with the raw amino-acid sequence, 204 residues long: CASP-like protein 3A1 (204 aa).

At 1–39 (MGSIGNGRNGSEVGIQIPAMGNKEVLERPAIPRWPRLGV) the chain is on the cytoplasmic side. Residues 40–60 (VMVATRAVALVMAVLSMALMI) form a helical membrane-spanning segment. The Extracellular portion of the chain corresponds to 61–88 (SAKQRGSLKIFGIEIPLYANWSFSDSLE). A glycan (N-linked (GlcNAc...) asparagine) is linked at asparagine 80. The helical transmembrane segment at 89-109 (YLVGMSAVSAAYCLAQLLLTA) threads the bilayer. At 110 to 124 (HKAVKNAPVVQSRNY) the chain is on the cytoplasmic side. A helical membrane pass occupies residues 125 to 145 (AWLLFTGDQIFAYAMMSAGSA). The Extracellular portion of the chain corresponds to 146–179 (AAAVANLNRTGIRHTALPNFCKPLPRFCDLSAAS). N-linked (GlcNAc...) asparagine glycosylation is present at asparagine 153. The helical transmembrane segment at 180–200 (IACAFLSCIFLAASAVIDVIW) threads the bilayer. Topologically, residues 201–204 (LSNM) are cytoplasmic.

The protein belongs to the Casparian strip membrane proteins (CASP) family. In terms of assembly, homodimer and heterodimers.

It is found in the cell membrane. This Oryza sativa subsp. indica (Rice) protein is CASP-like protein 3A1.